The chain runs to 231 residues: 2,3-bisphosphoglycerate-dependent phosphoglycerate mutase (231 aa).

Substrate is bound by residues 8-15 (RHGESEWN), 21-22 (TG), Arg-60, 87-90 (ERHY), Lys-98, 114-115 (RR), and 183-184 (GN). His-9 functions as the Tele-phosphohistidine intermediate in the catalytic mechanism. Glu-87 functions as the Proton donor/acceptor in the catalytic mechanism.

This sequence belongs to the phosphoglycerate mutase family. BPG-dependent PGAM subfamily.

It carries out the reaction (2R)-2-phosphoglycerate = (2R)-3-phosphoglycerate. It functions in the pathway carbohydrate degradation; glycolysis; pyruvate from D-glyceraldehyde 3-phosphate: step 3/5. In terms of biological role, catalyzes the interconversion of 2-phosphoglycerate and 3-phosphoglycerate. In Streptococcus pyogenes serotype M49 (strain NZ131), this protein is 2,3-bisphosphoglycerate-dependent phosphoglycerate mutase.